A 1436-amino-acid chain; its full sequence is Nuclear pore complex protein Nup160 (1436 aa).

Residues S44, S490, S949, and S1157 each carry the phosphoserine modification.

Part of the nuclear pore complex (NPC). Forms part of the NUP160 subcomplex in the nuclear pore which is composed of NUP160, NUP133, NUP107 and NUP96. This complex plays a role in RNA export and in tethering NUP98 and NUP153 to the nucleus.

It is found in the nucleus. The protein localises to the nuclear pore complex. Functions as a component of the nuclear pore complex (NPC). Involved in poly(A)+ RNA transport. In Homo sapiens (Human), this protein is Nuclear pore complex protein Nup160 (NUP160).